Here is a 101-residue protein sequence, read N- to C-terminus: Replication restart protein PriB (101 aa).

The region spanning 1 to 101 (MATNHLVLSG…LHAENVELKT (101 aa)) is the SSB domain.

This sequence belongs to the PriB family. In terms of assembly, homodimer. Interacts with PriA and DnaT. Component of the replication restart primosome. Primosome assembly occurs via a 'hand-off' mechanism. PriA binds to replication forks, subsequently PriB then DnaT bind; DnaT then displaces ssDNA to generate the helicase loading substrate.

In terms of biological role, involved in the restart of stalled replication forks, which reloads the replicative helicase on sites other than the origin of replication; the PriA-PriB pathway is the major replication restart pathway. During primosome assembly it facilitates complex formation between PriA and DnaT on DNA; stabilizes PriA on DNA. Stimulates the DNA unwinding activity of PriA helicase. The chain is Replication restart protein PriB from Shewanella sediminis (strain HAW-EB3).